Consider the following 159-residue polypeptide: Lipoprotein LpqH (159 aa).

Positions 1–21 (MKRGLTVAVAGAAILVAGLSG) are cleaved as a signal peptide. Residue Cys-22 is the site of N-palmitoyl cysteine attachment. The S-diacylglycerol cysteine moiety is linked to residue Cys-22. The interval 24–51 (SNKSTTGSGETTTAAGTTASPGAASGPK) is disordered. Low complexity predominate over residues 27–49 (STTGSGETTTAAGTTASPGAASG).

The protein belongs to the mycobacterial 19 kDa antigen family. In terms of processing, modified by Lgt on Cys-22 with an S-linked diacylglycerol with a mixture of C16, C18 and C19 fatty acids, signal peptide is removed by LspA, modifed by Lnt with an amide-linked mixture of C16 and C19 fatty acids.

It localises to the cell membrane. In terms of biological role, might be involved in ligand transport. A host TLR2 agonist, modifies host gene expression in response to pathogen. The chain is Lipoprotein LpqH (lpqH) from Mycobacterium bovis (strain ATCC BAA-935 / AF2122/97).